The chain runs to 422 residues: Leucine-rich repeat protein 1 (422 aa).

6 LRR repeats span residues 184 to 207, 209 to 230, 233 to 258, 260 to 279, 280 to 301, and 304 to 327; these read LKNL…IGDL, HLQE…LCTS, QKSL…QFRE, TNLN…IGQL, TNLR…EFKM, and LEYL…KLQV.

As to quaternary structure, component of the probable ECS(LRR1) E3 ubiquitin-protein ligase complex which contains CUL2, RBX1, Elongin BC complex and LRR1. Interacts with CUL2, RBX1, ELOB and ELOC.

The protein localises to the nucleus. Its pathway is protein modification; protein ubiquitination. Functionally, substrate recognition subunit of an ECS (Elongin BC-CUL2/5-SOCS-box protein) E3 ubiquitin-protein ligase complex which mediates the ubiquitination and subsequent proteasomal degradation of target proteins. ECS(LRR1) ubiquitinates MCM7 and promotes CMG replisome disassembly by VCP and chromatin extraction during S-phase. May negatively regulate the 4-1BB-mediated signaling cascades which result in the activation of NK-kappaB and JNK1. In Mus musculus (Mouse), this protein is Leucine-rich repeat protein 1.